Reading from the N-terminus, the 255-residue chain is 20 kDa chaperonin, chloroplastic (255 aa).

The N-terminal 53 residues, 1 to 53 (MAATHLTSTSSLTINTLPSFEGLRSASGISKINVSVAYPSFTSRSFRGLVVRA), are a transit peptide targeting the chloroplast. 2 cpn-10 domain regions span residues 54-156 (ASIT…ILET) and 157-255 (DDVK…AVLS).

This sequence belongs to the GroES chaperonin family. Forms stable complexes with CPN60 in the presence of ATP.

It localises to the plastid. The protein localises to the chloroplast. Functionally, seems to function only as a co-chaperone, along with cpn60, and in certain cases is essential for the discharge of biologically active proteins from cpn60. The polypeptide is 20 kDa chaperonin, chloroplastic (CPN21) (Spinacia oleracea (Spinach)).